Consider the following 329-residue polypeptide: Diaminopimelate epimerase (329 aa).

The substrate site is built by Asn-14 and Asn-73. The active-site Proton donor is Cys-82. Residues Gly-83 to Asn-84, Asn-170, Asn-206, and Glu-224 to Arg-225 contribute to the substrate site. Catalysis depends on Cys-233, which acts as the Proton acceptor. Gly-234–Thr-235 provides a ligand contact to substrate.

This sequence belongs to the diaminopimelate epimerase family. In terms of assembly, homodimer.

It localises to the cytoplasm. It carries out the reaction (2S,6S)-2,6-diaminopimelate = meso-2,6-diaminopimelate. The protein operates within amino-acid biosynthesis; L-lysine biosynthesis via DAP pathway; DL-2,6-diaminopimelate from LL-2,6-diaminopimelate: step 1/1. Catalyzes the stereoinversion of LL-2,6-diaminopimelate (L,L-DAP) to meso-diaminopimelate (meso-DAP), a precursor of L-lysine and an essential component of the bacterial peptidoglycan. The polypeptide is Diaminopimelate epimerase (Listeria monocytogenes serovar 1/2a (strain ATCC BAA-679 / EGD-e)).